The following is a 644-amino-acid chain: Magnetosome protein MamZ (644 aa).

Residues 1-427 form a major facilitator domain region; that stretch reads MPRNAEAPAK…YAAWLLANGI (427 aa). Helical transmembrane passes span 22–42, 63–83, 92–112, 113–133, 159–179, 185–205, 254–274, 281–301, 311–331, 337–357, 369–389, 403–423, 440–460, 478–498, 518–538, 553–573, 588–608, and 612–629; these read WNII…SISI, ADIQ…FGLL, IIAL…LSLQ, VGLA…VLLT, LMGN…AIVM, PGGV…GFQL, VIIL…LVGV, AHAA…VPLW, ISAI…LGMF, WLVA…FVTL, ILGA…VMLV, APFI…AWLL, TVDW…WLVG, VGFV…ISLA, IGLF…ALEW, PFIL…FTSA, LHSA…LAAN, and GEPY…WYRF. A ferric reductase-like domain region spans residues 488–599; that stretch reads WAFTFLIISL…SATYVINALV (112 aa).

In the N-terminal section; belongs to the major facilitator superfamily.

It is found in the magnetosome membrane. In terms of biological role, required for correct biomineralization of the magnetosome; probably converts and then transports some form of iron. It is partially functionally redundant with MamH. May function with MamX, MamY amd Mms6. In Paramagnetospirillum magneticum (strain ATCC 700264 / AMB-1) (Magnetospirillum magneticum), this protein is Magnetosome protein MamZ.